The following is a 503-amino-acid chain: Na(+)-translocating NADH-quinone reductase subunit B (503 aa).

Helical transmembrane passes span M55 to L75, I94 to L114, I120 to A140, T161 to V181, and F186 to F206. Position 248 is an FMN phosphoryl threonine (T248). Helical transmembrane passes span T361–W381, A386–V406, F417–M437, W452–Y472, and G475–V495.

It belongs to the NqrB/RnfD family. Composed of six subunits; NqrA, NqrB, NqrC, NqrD, NqrE and NqrF. Requires FMN as cofactor.

The protein localises to the cell inner membrane. The catalysed reaction is a ubiquinone + n Na(+)(in) + NADH + H(+) = a ubiquinol + n Na(+)(out) + NAD(+). NQR complex catalyzes the reduction of ubiquinone-1 to ubiquinol by two successive reactions, coupled with the transport of Na(+) ions from the cytoplasm to the periplasm. NqrA to NqrE are probably involved in the second step, the conversion of ubisemiquinone to ubiquinol. This Chlamydia pneumoniae (Chlamydophila pneumoniae) protein is Na(+)-translocating NADH-quinone reductase subunit B.